Reading from the N-terminus, the 137-residue chain is Histone H2B.1, sperm (137 aa).

Positions 1–43 (MPSQKSPTKRSPTKRSPQKGGKGAKRGGKAGKRRRGVAVKRRR) are disordered. 3 short sequence motifs (SPKK motif) span residues 6-9 (SPTK), 11-14 (SPTK), and 16-19 (SPQK). Residues 7–43 (PTKRSPTKRSPQKGGKGAKRGGKAGKRRRGVAVKRRR) show a composition bias toward basic residues. Phosphoserine is present on residues S11 and S16. The O-linked (GlcNAc) serine glycan is linked to S124. A Glycyl lysine isopeptide (Lys-Gly) (interchain with G-Cter in ubiquitin) cross-link involves residue K132.

The protein belongs to the histone H2B family. As to quaternary structure, the nucleosome is a histone octamer containing two molecules each of H2A, H2B, H3 and H4 assembled in one H3-H4 heterotetramer and two H2A-H2B heterodimers. The octamer wraps approximately 147 bp of DNA. Post-translationally, monoubiquitination of Lys-132 gives a specific tag for epigenetic transcriptional activation and is also prerequisite for histone H3 'Lys-4' and 'Lys-79' methylation. In terms of processing, phosphorylated on SPKK motifs 2 and 3; which may regulate DNA binding. Dephosphorylated during maturation of spermatids to mature sperm and rephosphorylated at fertilization. GlcNAcylation at Ser-124 promotes monoubiquitination of Lys-132. It fluctuates in response to extracellular glucose, and associates with transcribed genes.

Its subcellular location is the nucleus. It localises to the chromosome. Functionally, core component of nucleosome. Nucleosomes wrap and compact DNA into chromatin, limiting DNA accessibility to the cellular machineries which require DNA as a template. Histones thereby play a central role in transcription regulation, DNA repair, DNA replication and chromosomal stability. DNA accessibility is regulated via a complex set of post-translational modifications of histones, also called histone code, and nucleosome remodeling. The chain is Histone H2B.1, sperm from Psammechinus miliaris (Green sea urchin).